We begin with the raw amino-acid sequence, 263 residues long: MNVDIDTETGSSFSITIDFGETVLQIKEKIEKSQGIPVSKQILYLDGKALEDDLHKIDYMILFESLLLRISPDADPNQSNEQTEQSKQIDDKKQEFCGIQDSSESKKLTRVMARRVHNVYSSLPAYSLDELLGPKYSATVTVGGRTNQVVQTTEQASTSGTAKEVLRDSDSPVEKKIKTNPMKFTVHVKPYQEDTKMIQVEVNADDNVEELRKELVKMQERGELNLPHEAFHLVSSELPLIETKSFKWNRVADGDTIELIREK.

The region spanning 1 to 53 (MNVDIDTETGSSFSITIDFGETVLQIKEKIEKSQGIPVSKQILYLDGKALEDD) is the Ubiquitin-like 1 domain. The segment at 74–93 (ADPNQSNEQTEQSKQIDDKK) is disordered. Residues 76–86 (PNQSNEQTEQS) show a composition bias toward polar residues. The region spanning 184–263 (FTVHVKPYQE…GDTIELIREK (80 aa)) is the Ubiquitin-like 2 domain.

Belongs to the ubiquitin family. Expressed in seedlings, roots, stems, rosettes and flowers (at protein level).

The protein resides in the nucleus. Controls phase transition from the vegetative to the reproductive state. Involved in the maintenance of the shoot apical meristem (SAM) thus preventing inflorescence meristem (IM) formation and subsequent inflorescence stem development during flowering. Regulates leaf and organ morphology. The protein is Ubiquitin domain-containing protein 7SL RNA2 of Arabidopsis thaliana (Mouse-ear cress).